Consider the following 163-residue polypeptide: Peptidyl-prolyl cis-trans isomerase FKBP15-2 (163 aa).

The N-terminal stretch at methionine 1–alanine 25 is a signal peptide. The region spanning glycine 52–asparagine 140 is the PPIase FKBP-type domain. A disordered region spans residues lysine 142–leucine 163. The span at tyrosine 149–leucine 163 shows a compositional bias: acidic residues. The Prevents secretion from ER signature appears at asparagine 160–leucine 163.

Belongs to the FKBP-type PPIase family.

The protein localises to the endoplasmic reticulum lumen. The enzyme catalyses [protein]-peptidylproline (omega=180) = [protein]-peptidylproline (omega=0). In terms of biological role, PPIases accelerate the folding of proteins. It catalyzes the cis-trans isomerization of proline imidic peptide bonds in oligopeptides. This chain is Peptidyl-prolyl cis-trans isomerase FKBP15-2 (FKBP15-2), found in Arabidopsis thaliana (Mouse-ear cress).